Here is a 346-residue protein sequence, read N- to C-terminus: Uroporphyrinogen decarboxylase (346 aa).

Substrate-binding positions include 21–25 (RQAGR), Phe-40, Asp-71, Tyr-146, Ser-201, and His-316.

It belongs to the uroporphyrinogen decarboxylase family. Homodimer.

The protein localises to the cytoplasm. It carries out the reaction uroporphyrinogen III + 4 H(+) = coproporphyrinogen III + 4 CO2. It participates in porphyrin-containing compound metabolism; protoporphyrin-IX biosynthesis; coproporphyrinogen-III from 5-aminolevulinate: step 4/4. Functionally, catalyzes the decarboxylation of four acetate groups of uroporphyrinogen-III to yield coproporphyrinogen-III. This Rickettsia conorii (strain ATCC VR-613 / Malish 7) protein is Uroporphyrinogen decarboxylase.